The chain runs to 308 residues: MKFLWAALVVTLLAGCQADVEEEVKLGQEPDRWQAKQPWEQALGRFWEYLRWVQTLSNKVKEELLNSQVTEELKLLIEETMKEVKAYKEELEKQVGPIAQETQARLSKELQAAQARLESDMEDVRTRLAQYRSEAQAALGQNTDDLQGRLASHLRKLRKRLLRDAEDLQKRLAVYQAGTHEAAERGVSAIHERLGPLMMEGPLQAIPPSQQLRERAEAWGQKVRGRLESVGSQARDRLDDVRDQMEELKAKVEEQASQVRLQAEAFQTRLKSWFEPLVQDMQRQWASLVEKVQSSLGISPSTKPSKTK.

The N-terminal stretch at 1–18 (MKFLWAALVVTLLAGCQA) is a signal peptide. 8 repeat units span residues 75–96 (LLIE…KQVG), 97–118 (PIAQ…ARLE), 119–140 (SDME…AALG), 141–162 (QNTD…KRLL), 163–184 (RDAE…EAAE), 185–206 (RGVS…LQAI), 207–224 (PPSQ…QKVR), and 225–246 (GRLE…DQME). The interval 75 to 246 (LLIEETMKEV…RLDDVRDQME (172 aa)) is 8 X 22 AA approximate tandem repeats. The LDL and other lipoprotein receptors binding stretch occupies residues 153–163 (HLRKLRKRLLR). 157-160 (LRKR) contacts heparin. Residues 205 to 281 (AIPPSQQLRE…SWFEPLVQDM (77 aa)) are lipid-binding and lipoprotein association. 220–227 (GQKVRGRL) contacts heparin. A homooligomerization region spans residues 257-308 (SQVRLQAEAFQTRLKSWFEPLVQDMQRQWASLVEKVQSSLGISPSTKPSKTK). The interval 269–281 (RLKSWFEPLVQDM) is specificity for association with VLDL.

The protein belongs to the apolipoprotein A1/A4/E family. As to quaternary structure, homotetramer. May interact with ABCA1; functionally associated with ABCA1 in the biogenesis of HDLs. May interact with APP/A4 amyloid-beta peptide; the interaction is extremely stable in vitro but its physiological significance is unclear. May interact with MAPT. May interact with MAP2. In the cerebrospinal fluid, interacts with secreted SORL1. Interacts with PMEL; this allows the loading of PMEL luminal fragment on ILVs to induce fibril nucleation. In terms of processing, APOE exists as multiple glycosylated and sialylated glycoforms within cells and in plasma. The extent of glycosylation and sialylation are tissue and context specific. Glycated in plasma VLDL. Post-translationally, phosphorylated by FAM20C in the extracellular medium.

It is found in the secreted. Its subcellular location is the extracellular space. The protein resides in the extracellular matrix. It localises to the extracellular vesicle. The protein localises to the endosome. It is found in the multivesicular body. In terms of biological role, APOE is an apolipoprotein, a protein associating with lipid particles, that mainly functions in lipoprotein-mediated lipid transport between organs via the plasma and interstitial fluids. APOE is a core component of plasma lipoproteins and is involved in their production, conversion and clearance. Apolipoproteins are amphipathic molecules that interact both with lipids of the lipoprotein particle core and the aqueous environment of the plasma. As such, APOE associates with chylomicrons, chylomicron remnants, very low density lipoproteins (VLDL) and intermediate density lipoproteins (IDL) but shows a preferential binding to high-density lipoproteins (HDL). It also binds a wide range of cellular receptors including the LDL receptor/LDLR and the very low-density lipoprotein receptor/VLDLR that mediate the cellular uptake of the APOE-containing lipoprotein particles. Finally, APOE also has a heparin-binding activity and binds heparan-sulfate proteoglycans on the surface of cells, a property that supports the capture and the receptor-mediated uptake of APOE-containing lipoproteins by cells. The polypeptide is Apolipoprotein E (APOE) (Pteropus alecto (Black flying fox)).